The sequence spans 466 residues: Coproporphyrinogen III oxidase (466 aa).

FAD contacts are provided by residues 9–14, 34–35, lysine 42, 56–59, valine 254, and 446–448; these read GAGITG, EA, GPES, and VGL.

It belongs to the protoporphyrinogen/coproporphyrinogen oxidase family. Coproporphyrinogen III oxidase subfamily. It depends on FAD as a cofactor.

It localises to the cytoplasm. It catalyses the reaction coproporphyrinogen III + 3 O2 = coproporphyrin III + 3 H2O2. Its pathway is porphyrin-containing compound metabolism; protoheme biosynthesis. The generation of protoporphyrin IX, but not coproporphyrin III, is stimulated by heme-bound HemQ. This stimulatory effect is mediated by superoxide. Inhibited by acifluorfen analogs. Its function is as follows. Involved in coproporphyrin-dependent heme b biosynthesis. Catalyzes the oxidation of coproporphyrinogen III to coproporphyrin III. Can also oxidize protoporphyrinogen IX. This is Coproporphyrinogen III oxidase from Staphylococcus aureus (strain NCTC 8325 / PS 47).